The chain runs to 185 residues: Peptidyl-tRNA hydrolase (185 aa).

Y14 lines the tRNA pocket. The active-site Proton acceptor is the H19. 3 residues coordinate tRNA: F64, N66, and N112.

The protein belongs to the PTH family. In terms of assembly, monomer.

Its subcellular location is the cytoplasm. The enzyme catalyses an N-acyl-L-alpha-aminoacyl-tRNA + H2O = an N-acyl-L-amino acid + a tRNA + H(+). In terms of biological role, hydrolyzes ribosome-free peptidyl-tRNAs (with 1 or more amino acids incorporated), which drop off the ribosome during protein synthesis, or as a result of ribosome stalling. Catalyzes the release of premature peptidyl moieties from peptidyl-tRNA molecules trapped in stalled 50S ribosomal subunits, and thus maintains levels of free tRNAs and 50S ribosomes. The protein is Peptidyl-tRNA hydrolase of Levilactobacillus brevis (strain ATCC 367 / BCRC 12310 / CIP 105137 / JCM 1170 / LMG 11437 / NCIMB 947 / NCTC 947) (Lactobacillus brevis).